A 441-amino-acid chain; its full sequence is Ribulose bisphosphate carboxylase large chain (441 aa).

An N6,N6,N6-trimethyllysine modification is found at K5. Residues N114 and T164 each contribute to the substrate site. Residue K166 is the Proton acceptor of the active site. Residue K168 coordinates substrate. Residues K192, D194, and E195 each coordinate Mg(2+). N6-carboxylysine is present on K192. H285 acts as the Proton acceptor in catalysis. Substrate is bound by residues R286, H318, and S370.

The protein belongs to the RuBisCO large chain family. Type I subfamily. Heterohexadecamer of 8 large chains and 8 small chains; disulfide-linked. The disulfide link is formed within the large subunit homodimers. Requires Mg(2+) as cofactor. In terms of processing, the disulfide bond which can form in the large chain dimeric partners within the hexadecamer appears to be associated with oxidative stress and protein turnover.

The protein localises to the plastid. It localises to the chloroplast. The catalysed reaction is 2 (2R)-3-phosphoglycerate + 2 H(+) = D-ribulose 1,5-bisphosphate + CO2 + H2O. It carries out the reaction D-ribulose 1,5-bisphosphate + O2 = 2-phosphoglycolate + (2R)-3-phosphoglycerate + 2 H(+). In terms of biological role, ruBisCO catalyzes two reactions: the carboxylation of D-ribulose 1,5-bisphosphate, the primary event in carbon dioxide fixation, as well as the oxidative fragmentation of the pentose substrate in the photorespiration process. Both reactions occur simultaneously and in competition at the same active site. The chain is Ribulose bisphosphate carboxylase large chain from Drosera dichrosepala (Rusty sundew).